The chain runs to 955 residues: UvrABC system protein A (955 aa).

35-42 (GLSGSGKS) provides a ligand contact to ATP. ABC transporter domains are found at residues 322–601 (WGST…EESI) and 621–951 (GHDN…RYLK). 654 to 661 (GVSGSGKS) contributes to the ATP binding site. The C4-type zinc finger occupies 754-780 (CEACQGDGLIKIEMHFLPDVYVKCDIC).

This sequence belongs to the ABC transporter superfamily. UvrA family. Forms a heterotetramer with UvrB during the search for lesions.

It is found in the cytoplasm. Functionally, the UvrABC repair system catalyzes the recognition and processing of DNA lesions. UvrA is an ATPase and a DNA-binding protein. A damage recognition complex composed of 2 UvrA and 2 UvrB subunits scans DNA for abnormalities. When the presence of a lesion has been verified by UvrB, the UvrA molecules dissociate. The chain is UvrABC system protein A from Rickettsia conorii (strain ATCC VR-613 / Malish 7).